The following is a 306-amino-acid chain: Triplex capsid protein 2 (306 aa).

It belongs to the herpesviridae TRX2 protein family. Interacts with TRX1 and major capisd protein/MCP.

The protein resides in the virion. Its subcellular location is the host nucleus. Its function is as follows. Structural component of the T=16 icosahedral capsid. The capsid is composed of pentamers and hexamers of major capsid protein/MCP, which are linked together by heterotrimers called triplexes. These triplexes are formed by a single molecule of triplex protein 1/TRX1 and two copies of triplex protein 2/TRX2. Additionally, TRX1 is required for efficient transport of TRX2 to the nucleus, which is the site of capsid assembly. In Human cytomegalovirus (strain AD169) (HHV-5), this protein is Triplex capsid protein 2.